The chain runs to 226 residues: Endonuclease V (226 aa).

Residues D43 and D109 each coordinate Mg(2+).

Belongs to the endonuclease V family. The cofactor is Mg(2+).

The protein resides in the cytoplasm. It carries out the reaction Endonucleolytic cleavage at apurinic or apyrimidinic sites to products with a 5'-phosphate.. DNA repair enzyme involved in the repair of deaminated bases. Selectively cleaves double-stranded DNA at the second phosphodiester bond 3' to a deoxyinosine leaving behind the intact lesion on the nicked DNA. The protein is Endonuclease V of Kosmotoga olearia (strain ATCC BAA-1733 / DSM 21960 / TBF 19.5.1).